A 227-amino-acid chain; its full sequence is GRF-interacting factor 1 (227 aa).

Positions 186-227 are disordered; the sequence is RSGSGAKEGSTSLSVDVRGGTSSGAQSGDGEYLKVGTEEEGS.

This sequence belongs to the SS18 family. Interacts with several GRFs. Interacts with GRF10. Interacts with GRF1. In terms of tissue distribution, expressed in shoots, aerial roots, ears and tassels. Expressed in the shoot apical meristem (SAM), young leaf primordia, leaf margins, inflorescence meristem, floral meristem and spikelet meristem.

In terms of biological role, transcription coactivator that plays a role in the regulation of meristematic function in leaves, stems and inflorescences. Regulates shoot architecture and meristem determinacy. Binds to the inflorescence architecture gene UB3 (unbranched3). Regulates the expression of several genes involved in inflorescence architecture. Component of a network formed by the microRNA396 (miRNA396), the GRFs and their interacting factors (GIFs) acting in the regulation of meristem function, at least partially through the control of cell proliferation. Associates with the core SWI/SNF chromatin-remodeling complex and specific GRFs to tightly regulate the transition between cell division and cell expansion in growing leaves. This Zea mays (Maize) protein is GRF-interacting factor 1.